An 89-amino-acid polypeptide reads, in one-letter code: Small ribosomal subunit protein uS15 (89 aa).

It belongs to the universal ribosomal protein uS15 family. As to quaternary structure, part of the 30S ribosomal subunit. Forms a bridge to the 50S subunit in the 70S ribosome, contacting the 23S rRNA.

Its function is as follows. One of the primary rRNA binding proteins, it binds directly to 16S rRNA where it helps nucleate assembly of the platform of the 30S subunit by binding and bridging several RNA helices of the 16S rRNA. Forms an intersubunit bridge (bridge B4) with the 23S rRNA of the 50S subunit in the ribosome. The protein is Small ribosomal subunit protein uS15 of Photorhabdus luminescens (Xenorhabdus luminescens).